A 496-amino-acid chain; its full sequence is RNA-binding motif protein, Y chromosome, family 1 member D (496 aa).

One can recognise an RRM domain in the interval 8 to 85; the sequence is GKLFIGGLNR…KAIKVEQAKK (78 aa). 2 disordered regions span residues 67–349 and 452–496; these read DMNG…HRDY and KDQR…SSRY. Composition is skewed to low complexity over residues 97–114 and 149–159; these read PASS…SARG and PVKRGPSSRSG. Residues 175 to 184 show a composition bias toward polar residues; that stretch reads NSWMGSQGPM. Basic and acidic residues-rich tracts occupy residues 204–214, 242–253, 276–289, 313–326, 335–349, and 484–496; these read RNDRMSTRHDG, DNGHSNRDEHSS, AYRD…DESY, GYRD…HESY, SSRE…HRDY, and GESR…SSRY.

In terms of assembly, interacts with splicing factor proteins SFRS3/SRP20, TRA2B/SFRS10, KHDRBS1/SAM68 and KHDRBS3. In terms of tissue distribution, testis-specific.

It localises to the nucleus. Functionally, RNA-binding protein which may be involved in spermatogenesis. Required for sperm development, possibly by participating in pre-mRNA splicing in the testis. This chain is RNA-binding motif protein, Y chromosome, family 1 member D (RBMY1D), found in Homo sapiens (Human).